The primary structure comprises 475 residues: Cytosolic non-specific dipeptidase (475 aa).

Residue Ala2 is modified to N-acetylalanine. The residue at position 9 (Lys9) is an N6-acetyllysine. Ser58 carries the post-translational modification Phosphoserine. Residue His99 coordinates Mn(2+). Residue Asp101 is part of the active site. A Mn(2+)-binding site is contributed by Asp132. Glu166 (proton acceptor) is an active-site residue. Residues Glu166–Glu167, Asp195, and His228 contribute to the substrate site. Residues Glu167 and Asp195 each coordinate Mn(2+). Ser299 bears the Phosphoserine mark. Residues Thr330, Arg343, Ser417, and His445 each contribute to the substrate site. His445 contributes to the Mn(2+) binding site.

Belongs to the peptidase M20A family. Homodimer. The cofactor is Mn(2+). In terms of tissue distribution, ubiquitously expressed with higher levels in kidney and liver (at protein level). Expressed in peripheral blood leukocytes. Expressed in gastric mucosa and down-regulated in gastric cancer mucosal tissues (at protein level). As to expression, broadly expressed in fetal tissues. Expressed in adult liver and placenta.

The protein localises to the cytoplasm. It catalyses the reaction Hydrolysis of dipeptides, preferentially hydrophobic dipeptides including prolyl amino acids.. The catalysed reaction is L-threonyl-L-threonine + H2O = 2 L-threonine. It carries out the reaction L-threonyl-L-serine + H2O = L-threonine + L-serine. The enzyme catalyses L-seryl-L-threonine + H2O = L-threonine + L-serine. It catalyses the reaction L-cysteinylglycine + H2O = L-cysteine + glycine. The catalysed reaction is L-alanyl-L-cysteine + H2O = L-cysteine + L-alanine. It carries out the reaction (S)-lactate + L-phenylalanine = N-[(S)-lactoyl]-L-phenylalanine + H2O. Its activity is regulated as follows. Inhibited by p-hydroxymercurybenzoate. The inhibitory concentration 50% (IC(50)) is 13 uM. Inhibited by bestatin. The inhibitory concentration 50% (IC(50)) is 7 nM at pH 9.5. In terms of biological role, catalyzes the peptide bond hydrolysis in dipeptides, displaying a non-redundant activity toward threonyl dipeptides. Mediates threonyl dipeptide catabolism in a tissue-specific way. Has high dipeptidase activity toward cysteinylglycine, an intermediate metabolite in glutathione metabolism. Metabolizes N-lactoyl-amino acids, both through hydrolysis to form lactic acid and amino acids, as well as through their formation by reverse proteolysis. Plays a role in the regulation of cell cycle arrest and apoptosis. The protein is Cytosolic non-specific dipeptidase of Homo sapiens (Human).